The chain runs to 396 residues: Acetate kinase (396 aa).

Asn-7 provides a ligand contact to Mg(2+). Lys-14 is an ATP binding site. Arg-88 contacts substrate. The active-site Proton donor/acceptor is Asp-145. ATP-binding positions include 205–209 (HLGNG), 279–281 (DFR), and 327–331 (GIGEN). Glu-381 is a binding site for Mg(2+).

Belongs to the acetokinase family. As to quaternary structure, homodimer. Mg(2+) is required as a cofactor. The cofactor is Mn(2+).

Its subcellular location is the cytoplasm. The enzyme catalyses acetate + ATP = acetyl phosphate + ADP. It functions in the pathway metabolic intermediate biosynthesis; acetyl-CoA biosynthesis; acetyl-CoA from acetate: step 1/2. Its function is as follows. Catalyzes the formation of acetyl phosphate from acetate and ATP. Can also catalyze the reverse reaction. This Campylobacter jejuni subsp. jejuni serotype O:23/36 (strain 81-176) protein is Acetate kinase.